The chain runs to 316 residues: Transaldolase A (316 aa).

Lys-131 serves as the catalytic Schiff-base intermediate with substrate.

This sequence belongs to the transaldolase family. Type 1 subfamily. Homodimer.

The protein localises to the cytoplasm. The enzyme catalyses D-sedoheptulose 7-phosphate + D-glyceraldehyde 3-phosphate = D-erythrose 4-phosphate + beta-D-fructose 6-phosphate. It functions in the pathway carbohydrate degradation; pentose phosphate pathway; D-glyceraldehyde 3-phosphate and beta-D-fructose 6-phosphate from D-ribose 5-phosphate and D-xylulose 5-phosphate (non-oxidative stage): step 2/3. Functionally, transaldolase is important for the balance of metabolites in the pentose-phosphate pathway. The polypeptide is Transaldolase A (Shigella flexneri).